The primary structure comprises 196 residues: Gastrula zinc finger protein XlCGF8.2DB (196 aa).

7 consecutive C2H2-type zinc fingers follow at residues 6–28 (FTCKECGKGFTQKRNLASHMTIH), 34–56 (FSCTECGKGFTQKRNLASHLTIH), 62–84 (FPCTECGKGFTQKSNLVSHMKIH), 90–112 (FTCTECGKEFAHKHRLLGHLKIH), 118–140 (FSCTECGKHFAHKYHLVSHMKIH), 146–168 (FTCTECGEHFANKVSLLGHLKMH), and 174–196 (FTCTECGNSFTQVSSLVSHMKIH).

Belongs to the krueppel C2H2-type zinc-finger protein family.

The protein resides in the nucleus. In terms of biological role, may be involved in transcriptional regulation. The sequence is that of Gastrula zinc finger protein XlCGF8.2DB from Xenopus laevis (African clawed frog).